Here is a 362-residue protein sequence, read N- to C-terminus: Sterol-4-alpha-carboxylate 3-dehydrogenase, decarboxylating (362 aa).

Position 1 is an N-acetylmethionine (methionine 1). Tyrosine 161 (proton acceptor) is an active-site residue. Lysine 165 is a binding site for NAD(+). A helical transmembrane segment spans residues 287–307 (WMAYYLAFLLSLLVMVVSPLI). The short motif at 359-362 (RKDK) is the Prevents secretion from ER element.

The protein belongs to the 3-beta-HSD family. As to quaternary structure, homodimer.

Its subcellular location is the endoplasmic reticulum membrane. The protein localises to the lipid droplet. The enzyme catalyses a 3beta-hydroxysteroid-4alpha-carboxylate + NADP(+) = a 3-oxosteroid + CO2 + NADPH. The catalysed reaction is a 3beta-hydroxysteroid-4alpha-carboxylate + NAD(+) = a 3-oxosteroid + CO2 + NADH. It catalyses the reaction 4alpha-carboxyzymosterol + NADP(+) = zymosterone + CO2 + NADPH. It carries out the reaction 4alpha-carboxy-4beta-methyl-5alpha-cholest-8-en-3beta-ol + NADP(+) = 4alpha-methyl-5alpha-cholest-8-en-3-one + CO2 + NADPH. The enzyme catalyses 4alpha-carboxy-5alpha-cholest-8-ene-3beta-ol + NADP(+) = 5alpha-cholest-8-en-3-one + CO2 + NADPH. The catalysed reaction is 4beta-methylzymosterol-4alpha-carboxylate + NADP(+) = 3-dehydro-4-methylzymosterol + CO2 + NADPH. It catalyses the reaction 4beta-methylzymosterol-4alpha-carboxylate + NAD(+) = 3-dehydro-4-methylzymosterol + CO2 + NADH. It carries out the reaction 4alpha-carboxy-5alpha-cholest-8-ene-3beta-ol + NAD(+) = 5alpha-cholest-8-en-3-one + CO2 + NADH. The enzyme catalyses 4alpha-carboxy-4beta-methyl-5alpha-cholest-8-en-3beta-ol + NAD(+) = 4alpha-methyl-5alpha-cholest-8-en-3-one + CO2 + NADH. The catalysed reaction is 4alpha-carboxyzymosterol + NAD(+) = zymosterone + CO2 + NADH. It participates in steroid biosynthesis; zymosterol biosynthesis; zymosterol from lanosterol: step 4/6. Functionally, catalyzes the NAD(P)(+)-dependent oxidative decarboxylation of the C4 methyl groups of 4-alpha-carboxysterols in post-squalene cholesterol biosynthesis. Plays a role in the regulation of the endocytic trafficking of EGFR. This chain is Sterol-4-alpha-carboxylate 3-dehydrogenase, decarboxylating (Nsdhl), found in Mus musculus (Mouse).